The chain runs to 534 residues: GMP synthase [glutamine-hydrolyzing] (534 aa).

In terms of domain architecture, Glutamine amidotransferase type-1 spans 20–210 (PVLVIDFGAQ…LLVGAGCRPS (191 aa)). Cysteine 97 (nucleophile) is an active-site residue. Residues histidine 184 and glutamate 186 contribute to the active site. The region spanning 211-408 (WTMINIVEEA…LGLPEDIVWR (198 aa)) is the GMPS ATP-PPase domain. 238 to 244 (SGGVDSA) is a binding site for ATP.

Homodimer.

The enzyme catalyses XMP + L-glutamine + ATP + H2O = GMP + L-glutamate + AMP + diphosphate + 2 H(+). It functions in the pathway purine metabolism; GMP biosynthesis; GMP from XMP (L-Gln route): step 1/1. In terms of biological role, catalyzes the synthesis of GMP from XMP. In Parafrankia sp. (strain EAN1pec), this protein is GMP synthase [glutamine-hydrolyzing].